The following is a 563-amino-acid chain: Cystathionine gamma-synthase-like protein ankD (563 aa).

A disordered region spans residues 1-37 (MGELGPASAQHGSDSISFSGSYTQPLGAPQPPNEPHA). The segment covering 10-24 (QHGSDSISFSGSYTQ) has biased composition (polar residues).

The protein belongs to the trans-sulfuration enzymes family. MET7 subfamily. Requires pyridoxal 5'-phosphate as cofactor.

The catalysed reaction is cyclo(L-arginyl-(Z)-dehydro-3,4-dihydroxytyrosyl) + O-acetyl-L-homoserine = cyclo(L-arginyl-(Z)-dehydro-4-O-homoseryl-tyrosyl) + acetate + H(+). The protein operates within secondary metabolite biosynthesis. Its function is as follows. Cystathionine gamma-synthase-like protein; part of the ank cluster that mediates the biosynthesis of NK13650 C, a highly modified cyclo-arginine-tyrosine dipeptide. AnkD catalyzes the attachment of L-homoserine moiety using O-acetyl-L-homoserine as co-substrate. Within the pathway, the cyclodipeptide synthase ankA acts as the scaffold-generating enzyme and is responsible for formation of the cyclo-Arg-Tyr diketopiperazine (cRY) from L-Arg and L-Tyr. The ankA product cRY is desaturated by the cytochrome P450 monooxygenase ankB to yield a dehydro-cyclodipeptide intermediate. The FAD-dependent monooxygenase ankC then installs the m-OH, ankD catalyzes the attachment of L-homoserine, and ankE ligates citrate to the ankD product to yield NK13650 B. The O-methyltransferase ankF is responsible for methylation of the C-17 phenol group of NK13650 B to produce NK13650 D. Amidation of NK13650 D with L-Asp by ankG then leads to the production of NK13650 C, whereas amidation of NK13650 B produces NK13650 A. In Aspergillus thermomutatus (Neosartorya pseudofischeri), this protein is Cystathionine gamma-synthase-like protein ankD.